Consider the following 132-residue polypeptide: Small ribosomal subunit protein uS8 (132 aa).

It belongs to the universal ribosomal protein uS8 family. Part of the 30S ribosomal subunit. Contacts proteins S5 and S12.

Its function is as follows. One of the primary rRNA binding proteins, it binds directly to 16S rRNA central domain where it helps coordinate assembly of the platform of the 30S subunit. The sequence is that of Small ribosomal subunit protein uS8 from Rhodopseudomonas palustris (strain BisB18).